A 147-amino-acid chain; its full sequence is Ubiquitin-conjugating enzyme E2 D3 (147 aa).

In terms of domain architecture, UBC core spans 1–147; that stretch reads MALKRINKEL…SREWTQKYAM (147 aa). Cys21 and Cys107 are joined by a disulfide. Catalysis depends on Cys85, which acts as the Glycyl thioester intermediate.

Belongs to the ubiquitin-conjugating enzyme family. In terms of assembly, interacts with SCF (SKP1-CUL1-F-box protein) E3 ubiquitin ligase complex; when Cullin is neddylated, the interaction between the E2 and the SCF complex is strengthened. Interacts with DAPK3. Interacts with BRCA1; the DNA damage checkpoint promotes the association with BRCA1 after ionizing radiation. Interacts non-covalently with ubiquitin. Interacts with E3 ubiquitin-protein ligase CBLC. Interacts with UBTD1. Interacts with RIGI and RNF135; involved in RIGI ubiquitination and activation. Post-translationally, phosphorylated by AURKB.

The protein resides in the cell membrane. It localises to the endosome membrane. It carries out the reaction S-ubiquitinyl-[E1 ubiquitin-activating enzyme]-L-cysteine + [E2 ubiquitin-conjugating enzyme]-L-cysteine = [E1 ubiquitin-activating enzyme]-L-cysteine + S-ubiquitinyl-[E2 ubiquitin-conjugating enzyme]-L-cysteine.. The catalysed reaction is S-ubiquitinyl-[E1 ubiquitin-activating enzyme]-L-cysteine + [acceptor protein]-L-lysine = [E1 ubiquitin-activating enzyme]-L-cysteine + N(6)-monoubiquitinyl-[acceptor protein]-L-lysine.. The protein operates within protein modification; protein ubiquitination. Its function is as follows. Accepts ubiquitin from the E1 complex and catalyzes its covalent attachment to other proteins. In vitro catalyzes 'Lys-11'-, as well as 'Lys-48'-linked polyubiquitination. Cooperates with the E2 CDC34 and the SCF(FBXW11) E3 ligase complex for the polyubiquitination of NFKBIA leading to its subsequent proteasomal degradation. Acts as an initiator E2, priming the phosphorylated NFKBIA target at positions 'Lys-21' and/or 'Lys-22' with a monoubiquitin. Ubiquitin chain elongation is then performed by CDC34, building ubiquitin chains from the UBE2D3-primed NFKBIA-linked ubiquitin. Also acts as an initiator E2, in conjunction with RNF8, for the priming of PCNA. Monoubiquitination of PCNA, and its subsequent polyubiquitination, are essential events in the operation of the DNA damage tolerance (DDT) pathway that is activated after DNA damage caused by UV or chemical agents during S-phase. Associates with the BRCA1/BARD1 E3 ligase complex to perform ubiquitination at DNA damage sites following ionizing radiation leading to DNA repair. Targets DAPK3 for ubiquitination which influences promyelocytic leukemia protein nuclear body (PML-NB) formation in the nucleus. In conjunction with the MDM2 and TOPORS E3 ligases, functions ubiquitination of p53/TP53. In conjunction with the CBL E3 ligase, targets EGFR for polyubiquitination at the plasma membrane as well as during its internalization and transport on endosomes. In conjunction with the STUB1 E3 quality control E3 ligase, ubiquitinates unfolded proteins to catalyze their immediate destruction. Together with RNF135, catalyzes the viral RNA-dependent 'Lys-63'-linked polyubiquitination of RIGI to activate the downstream signaling pathway that leads to interferon beta production. Together with ZNF598, catalyzes ubiquitination of 40S ribosomal proteins in response to ribosome collisions. In cooperation with the GATOR2 complex, catalyzes 'Lys-6'-linked ubiquitination of NPRL2. The protein is Ubiquitin-conjugating enzyme E2 D3 (UBE2D3) of Bos taurus (Bovine).